Consider the following 249-residue polypeptide: Diaminopimelate epimerase (249 aa).

Substrate contacts are provided by N11 and N60. Catalysis depends on C69, which acts as the Proton donor. Substrate contacts are provided by residues 70 to 71, N164, and 182 to 183; these read GN and ER. Residue C192 is the Proton acceptor of the active site. 193 to 194 is a binding site for substrate; that stretch reads GT.

It belongs to the diaminopimelate epimerase family. As to quaternary structure, homodimer.

Its subcellular location is the cytoplasm. The enzyme catalyses (2S,6S)-2,6-diaminopimelate = meso-2,6-diaminopimelate. Its pathway is amino-acid biosynthesis; L-lysine biosynthesis via DAP pathway; DL-2,6-diaminopimelate from LL-2,6-diaminopimelate: step 1/1. Catalyzes the stereoinversion of LL-2,6-diaminopimelate (L,L-DAP) to meso-diaminopimelate (meso-DAP), a precursor of L-lysine and an essential component of the bacterial peptidoglycan. The chain is Diaminopimelate epimerase from Campylobacter jejuni subsp. jejuni serotype O:6 (strain 81116 / NCTC 11828).